The chain runs to 223 residues: Peptidyl-prolyl cis-trans isomerase, mitochondrial (223 aa).

A mitochondrion-targeting transit peptide spans 1 to 44 (MFGPRHFSVLKTTGSLVSSTFSSSLKPTATFSCARAFSQTSSIM). A PPIase cyclophilin-type domain is found at 62–222 (NKPTSEIKAQ…KKPTIVDCGA (161 aa)).

This sequence belongs to the cyclophilin-type PPIase family.

The protein resides in the mitochondrion. Its subcellular location is the cytoplasm. It carries out the reaction [protein]-peptidylproline (omega=180) = [protein]-peptidylproline (omega=0). Binds cyclosporin A (CsA). CsA mediates some of its effects via an inhibitory action on PPIase. In terms of biological role, PPIases accelerate the folding of proteins. It catalyzes the cis-trans isomerization of proline imidic peptide bonds in oligopeptides. The protein is Peptidyl-prolyl cis-trans isomerase, mitochondrial (csr-1) of Neurospora crassa (strain ATCC 24698 / 74-OR23-1A / CBS 708.71 / DSM 1257 / FGSC 987).